Reading from the N-terminus, the 836-residue chain is Translation initiation factor IF-2 (836 aa).

The tract at residues 1-234 (MSDTDGKKPL…SLAAMKRKQE (234 aa)) is disordered. Polar residues predominate over residues 18–27 (SGQVKQSFSH). Residues 50–60 (SGSSTTTSSPS) show a composition bias toward low complexity. Residues 88–156 (KLREVEDAKR…ATRRAEEAKR (69 aa)) are compositionally biased toward basic and acidic residues. Residues 167-176 (PAESRASAPP) show a composition bias toward low complexity. Over residues 185-206 (SRKEREREADRDRTTKKDDSRR) the composition is skewed to basic and acidic residues. The 169-residue stretch at 333-501 (PRPPIITIMG…NIALQAEILD (169 aa)) folds into the tr-type G domain. The interval 342-349 (GHVDHGKT) is G1. Position 342–349 (342–349 (GHVDHGKT)) interacts with GTP. The segment at 367-371 (GITQH) is G2. Residues 389 to 392 (DTPG) form a G3 region. GTP contacts are provided by residues 389-393 (DTPGH) and 443-446 (NKID). Residues 443–446 (NKID) are G4. The segment at 479 to 481 (SAK) is G5.

It belongs to the TRAFAC class translation factor GTPase superfamily. Classic translation factor GTPase family. IF-2 subfamily.

It localises to the cytoplasm. Functionally, one of the essential components for the initiation of protein synthesis. Protects formylmethionyl-tRNA from spontaneous hydrolysis and promotes its binding to the 30S ribosomal subunits. Also involved in the hydrolysis of GTP during the formation of the 70S ribosomal complex. The chain is Translation initiation factor IF-2 from Cereibacter sphaeroides (strain ATCC 17029 / ATH 2.4.9) (Rhodobacter sphaeroides).